The following is a 335-amino-acid chain: Anthranilate phosphoribosyltransferase (335 aa).

5-phospho-alpha-D-ribose 1-diphosphate-binding positions include Gly-79, 82 to 83 (GD), Thr-87, 89 to 92 (NIST), 107 to 115 (KHCNQGVSS), and Ser-119. Gly-79 lines the anthranilate pocket. Ser-91 serves as a coordination point for Mg(2+). Residue Asn-110 coordinates anthranilate. Arg-165 is a binding site for anthranilate. Residues Asp-223 and Glu-224 each coordinate Mg(2+).

This sequence belongs to the anthranilate phosphoribosyltransferase family. As to quaternary structure, homodimer. Mg(2+) serves as cofactor.

It catalyses the reaction N-(5-phospho-beta-D-ribosyl)anthranilate + diphosphate = 5-phospho-alpha-D-ribose 1-diphosphate + anthranilate. Its pathway is amino-acid biosynthesis; L-tryptophan biosynthesis; L-tryptophan from chorismate: step 2/5. Its function is as follows. Catalyzes the transfer of the phosphoribosyl group of 5-phosphorylribose-1-pyrophosphate (PRPP) to anthranilate to yield N-(5'-phosphoribosyl)-anthranilate (PRA). The chain is Anthranilate phosphoribosyltransferase from Buchnera aphidicola subsp. Diuraphis noxia.